The chain runs to 283 residues: Protein BASIC PENTACYSTEINE1 (283 aa).

The tract at residues 111–170 is disordered; it reads RFEENPIPPPAPCEEQTGKKRKMRGSIATPTVPKAKKMRKPKEERDVTNNNVQQQQQRVK. Over residues 158 to 169 the composition is skewed to low complexity; that stretch reads TNNNVQQQQQRV.

Belongs to the BBR/BPC family. As to expression, expressed in seedlings, leaves and pistils. Detected in the base of flowers and tips of carpels, in leaf and sepal vasculature, in young rosette, in the lateral and tip of primary roots, and in the whole ovule.

The protein resides in the nucleus. Transcriptional regulator that specifically binds to GA-rich elements (GAGA-repeats) present in regulatory sequences of genes involved in developmental processes. Negatively regulates the homeotic gene AGL11/STK, which controls ovule primordium identity, by a cooperative binding to purine-rich elements present in the regulatory sequence leading to DNA conformational changes. The polypeptide is Protein BASIC PENTACYSTEINE1 (BPC1) (Arabidopsis thaliana (Mouse-ear cress)).